A 178-amino-acid polypeptide reads, in one-letter code: Fatty-acid and retinol-binding protein 1 (178 aa).

The N-terminal stretch at M1 to A16 is a signal peptide. N-linked (GlcNAc...) asparagine glycosylation is found at N44 and N75. Coiled coils occupy residues D67 to N89 and Q122 to T154. An N-linked (GlcNAc...) asparagine glycan is attached at N157.

It belongs to the fatty-acid and retinol-binding protein (FARBP) family. N-glycosylated.

The protein localises to the secreted. Binds retinol and different fatty acids. In Onchocerca dukei (Filarial nematode worm), this protein is Fatty-acid and retinol-binding protein 1.